The chain runs to 180 residues: Ribulose bisphosphate carboxylase small subunit, chloroplastic (180 aa).

Residues 1-56 constitute a chloroplast transit peptide; the sequence is MALISSAAVTTVNRASSAQANLVAPFTGLKSSAGFPVTKKTNNDITSIASNGGRVN.

The protein belongs to the RuBisCO small chain family. In terms of assembly, heterohexadecamer of 8 large and 8 small subunits.

The protein localises to the plastid. It is found in the chloroplast. Functionally, ruBisCO catalyzes two reactions: the carboxylation of D-ribulose 1,5-bisphosphate, the primary event in carbon dioxide fixation, as well as the oxidative fragmentation of the pentose substrate. Both reactions occur simultaneously and in competition at the same active site. Although the small subunit is not catalytic it is essential for maximal activity. The chain is Ribulose bisphosphate carboxylase small subunit, chloroplastic from Medicago sativa (Alfalfa).